We begin with the raw amino-acid sequence, 296 residues long: Cytidine deaminase (296 aa).

2 CMP/dCMP-type deaminase domains span residues 47-167 (TEAE…FGPK) and 186-296 (DSSD…VDPV). Position 88–90 (88–90 (NLE)) interacts with substrate. His101 serves as a coordination point for Zn(2+). Catalysis depends on Glu103, which acts as the Proton donor. 2 residues coordinate Zn(2+): Cys128 and Cys131.

It belongs to the cytidine and deoxycytidylate deaminase family. Homodimer. Zn(2+) is required as a cofactor.

It catalyses the reaction cytidine + H2O + H(+) = uridine + NH4(+). The enzyme catalyses 2'-deoxycytidine + H2O + H(+) = 2'-deoxyuridine + NH4(+). Its function is as follows. This enzyme scavenges exogenous and endogenous cytidine and 2'-deoxycytidine for UMP synthesis. The chain is Cytidine deaminase from Shewanella sp. (strain ANA-3).